The primary structure comprises 1054 residues: Reverse gyrase (1054 aa).

The RG N-terminal-type zinc-finger motif lies at 1–43 (MIPVVYSNLCPVCGGDLESKEIEKHVCFRKKRSLCLFPEDFLL). Residues C10, C13, C27, and C35 each coordinate Zn(2+). C35 and C650 are disulfide-bonded. Q61, K84, T85, and S86 together coordinate ATP. Residues 65-245 (AKRILRKESF…FRQLLNFDIG (181 aa)) form the Helicase ATP-binding domain. Positions 182-185 (DDVD) match the DEAD box motif. A latch region region spans residues 352-427 (PSFRVTIEDI…EGEVIFPDLR (76 aa)). The segment at 502-1054 (DLIKPALFIV…DLYAEIKSID (553 aa)) is topoisomerase I. Residues 506–662 (PALFIVESPT…VKRAEFHEVT (157 aa)) enclose the Toprim domain. E512 contacts Mg(2+). The segment at 581–609 (IKRCRDCGYQFTEDRESCPKCGSENVDNS) adopts an RG C-terminal-type zinc-finger fold. Zn(2+) is bound by residues C584, C587, C598, and C601. D631 contacts Mg(2+). Residues 677–1054 (DENLVKAQVV…DLYAEIKSID (378 aa)) form the Topo IA-type catalytic domain. The O-(5'-phospho-DNA)-tyrosine intermediate role is filled by Y809.

This sequence in the N-terminal section; belongs to the DEAD box helicase family. DDVD subfamily. In the C-terminal section; belongs to the type IA topoisomerase family. As to quaternary structure, monomer. Requires Zn(2+) as cofactor. The cofactor is Mg(2+).

The protein resides in the cytoplasm. It carries out the reaction ATP + H2O = ADP + phosphate + H(+). Its function is as follows. Modifies the topological state of DNA by introducing positive supercoils in an ATP-dependent process, increasing the linking number in steps of +1. Very efficient supercoiling occurs on relaxed DNA with a single-stranded bubble; the minimal bubble is 20 nucleotides (nt) and up to 10 positive supercoils can be introduced into a 3.1 kb plasmid with a 50 nt bubble. Positively supercoils DNA with all (d)NTPS, although it requires about 10-fold more of non-(d)ATP. In the absence of ATP (or at low levels of enzyme), or in the presence of ADP, relaxes negative supercoils. Only relaxes positive supercoils when the substrate contains a bubble. Also promotes strand annealing of complementary ssDNA circles. Binds to single-stranded DNA, transiently cleaves and then rejoins the ends, introducing a positive supercoil in the process. The scissile phosphodiester is attacked by the catalytic tyrosine of the enzyme, resulting in the formation of a DNA-(5'-phosphotyrosyl)-enzyme intermediate. Probably involved in rewinding DNA strands in regions of the chromosome that have opened up to allow replication, transcription, DNA repair and/or for DNA protection. In vitro protects DNA against degradation at 90 degrees Celsius, reducing dsDNA breakage about 8-fold; ATP hydrolysis is not necessary, while ADP decreases the protection somewhat. Coats all forms of dsDNA; the DNA is protected against cleavage and transcription. Recognizes nicked DNA and forms a coat at the nicking site, which may help hold DNA in a structure amenable to repair. The chain is Reverse gyrase from Archaeoglobus fulgidus (strain ATCC 49558 / DSM 4304 / JCM 9628 / NBRC 100126 / VC-16).